The primary structure comprises 249 residues: Aliphatic sulfonates import ATP-binding protein SsuB 2 (249 aa).

The 217-residue stretch at 15–231 (VHVRDLARRF…DHGDPRFAQF (217 aa)) folds into the ABC transporter domain. 47–54 (GRSGSGKS) contacts ATP.

This sequence belongs to the ABC transporter superfamily. Aliphatic sulfonates importer (TC 3.A.1.17.2) family. In terms of assembly, the complex is composed of two ATP-binding proteins (SsuB), two transmembrane proteins (SsuC) and a solute-binding protein (SsuA).

It localises to the cell inner membrane. It catalyses the reaction ATP + H2O + aliphatic sulfonate-[sulfonate-binding protein]Side 1 = ADP + phosphate + aliphatic sulfonateSide 2 + [sulfonate-binding protein]Side 1.. In terms of biological role, part of the ABC transporter complex SsuABC involved in aliphatic sulfonates import. Responsible for energy coupling to the transport system. The polypeptide is Aliphatic sulfonates import ATP-binding protein SsuB 2 (Rhizobium johnstonii (strain DSM 114642 / LMG 32736 / 3841) (Rhizobium leguminosarum bv. viciae)).